The following is a 243-amino-acid chain: Small ribosomal subunit protein uS2 (243 aa).

This sequence belongs to the universal ribosomal protein uS2 family.

This is Small ribosomal subunit protein uS2 from Pseudoalteromonas atlantica (strain T6c / ATCC BAA-1087).